A 104-amino-acid polypeptide reads, in one-letter code: Large ribosomal subunit protein uL24 (104 aa).

It belongs to the universal ribosomal protein uL24 family. In terms of assembly, part of the 50S ribosomal subunit.

Its function is as follows. One of two assembly initiator proteins, it binds directly to the 5'-end of the 23S rRNA, where it nucleates assembly of the 50S subunit. One of the proteins that surrounds the polypeptide exit tunnel on the outside of the subunit. This chain is Large ribosomal subunit protein uL24, found in Corynebacterium jeikeium (strain K411).